A 354-amino-acid polypeptide reads, in one-letter code: Polyribonucleotide 5'-hydroxyl-kinase PYRAB01840 (354 aa).

G36–T43 serves as a coordination point for ATP.

A divalent metal cation is required as a cofactor.

It carries out the reaction a 5'-end dephospho-2'-deoxyribonucleoside-DNA + ATP = a 5'-end 5'-phospho-2'-deoxyribonucleoside-DNA + ADP + H(+). The catalysed reaction is a 5'-end dephospho-ribonucleoside-RNA + ATP = a 5'-end 5'-phospho-ribonucleoside-RNA + ADP + H(+). Functionally, polynucleotide kinase that can phosphorylate the 5'-hydroxyl groups of both single-stranded RNA (ssRNA) and single-stranded DNA (ssDNA). Exhibits a strong preference for ssRNA. In Pyrococcus abyssi (strain GE5 / Orsay), this protein is Polyribonucleotide 5'-hydroxyl-kinase PYRAB01840.